A 245-amino-acid polypeptide reads, in one-letter code: Probable phosphatase YcdX (245 aa).

Zn(2+) is bound by residues histidine 7, histidine 9, histidine 15, histidine 40, glutamate 73, histidine 101, histidine 131, aspartate 192, and histidine 194.

The protein belongs to the PHP family. Homotrimer. It depends on Zn(2+) as a cofactor.

In Escherichia coli O139:H28 (strain E24377A / ETEC), this protein is Probable phosphatase YcdX.